The following is a 388-amino-acid chain: Chorismate synthase (388 aa).

Positions 39 and 45 each coordinate NADP(+). FMN is bound by residues 130–132, 251–252, glycine 296, 311–315, and arginine 337; these read RSS, NA, and KPIPT.

The protein belongs to the chorismate synthase family. As to quaternary structure, homotetramer. FMNH2 is required as a cofactor.

It carries out the reaction 5-O-(1-carboxyvinyl)-3-phosphoshikimate = chorismate + phosphate. Its pathway is metabolic intermediate biosynthesis; chorismate biosynthesis; chorismate from D-erythrose 4-phosphate and phosphoenolpyruvate: step 7/7. Functionally, catalyzes the anti-1,4-elimination of the C-3 phosphate and the C-6 proR hydrogen from 5-enolpyruvylshikimate-3-phosphate (EPSP) to yield chorismate, which is the branch point compound that serves as the starting substrate for the three terminal pathways of aromatic amino acid biosynthesis. This reaction introduces a second double bond into the aromatic ring system. This chain is Chorismate synthase, found in Streptococcus agalactiae serotype III (strain NEM316).